A 636-amino-acid chain; its full sequence is Multicopper oxidase CTB12 (636 aa).

Positions 1–23 are cleaved as a signal peptide; it reads MWSVRLYPLALTLLFQCVSPAAA. One can recognise a Plastocyanin-like 1 domain in the interval 62-168; sequence AGIGFREAIF…LYGAVVIAPD (107 aa). Residues H104 and H106 each coordinate Cu cation. N136 is a glycosylation site (N-linked (GlcNAc...) asparagine). Residues H148 and H150 each contribute to the Cu cation site. N-linked (GlcNAc...) asparagine glycosylation is present at N304. Positions 318-381 constitute a Plastocyanin-like 2 domain; the sequence is LTFVNPGGLY…QEKARHVVRV (64 aa). The N-linked (GlcNAc...) asparagine glycan is linked to N472. Positions 486 to 613 constitute a Plastocyanin-like 3 domain; sequence NVEDVPATEL…GGMGMVVLDG (128 aa). Cu cation is bound by residues H519, H522, and H524. N576 carries an N-linked (GlcNAc...) asparagine glycan. Cu cation contacts are provided by H595, C596, H597, and H601.

This sequence belongs to the multicopper oxidase family.

Its pathway is mycotoxin biosynthesis. In terms of biological role, multicopper oxidase; part of the gene cluster that mediates the biosynthesis of cercosporin, a light-activated, non-host-selective toxin. The perylenequinone chromophore of cercosporin absorbs light energy to attain an electronically-activated triplet state and produces active oxygen species such as the hydroxyl radical, superoxide, hydrogen peroxide or singlet oxygen upon reaction with oxygen molecules. These reactive oxygen species cause damage to various cellular components including lipids, proteins and nucleic acids. The first step of cercosporin biosynthesis is performed by the polyketide synthase CTB1 which catalyzes the formation of nor-toralactone. The starter unit acyltransferase (SAT) domain of CTB1 initiates polyketide extension by the selective utilization of acetyl-CoA, which is elongated to the heptaketide in the beta-ketoacyl synthase (KS) domain by successive condensations with six malonyl units introduced by the malonyl acyltransferase (MAT) domain. The product template (PT) domain catalyzes C4-C9 and C2-C11 aldol cyclizations and dehydrations to a trihydroxynaphthalene, which is thought to be delivered to the thioesterase (TE) domain for product release. The bifunctional enzyme CTB3 then methylates nor-toralactone to toralactone before conducting an unusual oxidative aromatic ring opening. The O-methyltransferase CTB2 further methylates the nascent OH-6 of the CBT3 product, blocking further oxidation at this site before the reductase CTB6 reduces the 2-oxopropyl ketone at position C7, giving naphthalene. The FAD-dependent monooxygenase CTB5 in concert with the multicopper oxidase CTB12 are responsible for homodimerization of naphthalene with CTB7 installing the dioxepine moiety, finally producing cercosporin. The fasciclin domain-containing protein CTB11 might act with CTB5 and CTB12 whereas the roles of CTB9 and CTB10 have still to be elucidated. The protein is Multicopper oxidase CTB12 of Cercospora beticola (Sugarbeet leaf spot fungus).